We begin with the raw amino-acid sequence, 660 residues long: Bifunctional polymyxin resistance protein ArnA (660 aa).

The interval 1-304 (MKTVVFAYHD…TLGLVQGSRL (304 aa)) is formyltransferase ArnAFT. 86–88 (HLI) serves as a coordination point for (6R)-10-formyltetrahydrofolate. The active-site Proton donor; for formyltransferase activity is the histidine 104. (6R)-10-formyltetrahydrofolate contacts are provided by residues arginine 114 and 136–140 (VKRAD). The tract at residues 314–660 (RRTRVLILGV…RTVDLTDKPL (347 aa)) is dehydrogenase ArnADH. NAD(+) contacts are provided by residues aspartate 347 and 368–369 (DI). UDP-alpha-D-glucuronate contacts are provided by residues alanine 393, tyrosine 398, and 432–433 (TS). Glutamate 434 functions as the Proton acceptor; for decarboxylase activity in the catalytic mechanism. UDP-alpha-D-glucuronate is bound by residues arginine 460, asparagine 492, 526–535 (KLIDGGKQKR), and tyrosine 613. The active-site Proton donor; for decarboxylase activity is the arginine 619.

In the N-terminal section; belongs to the Fmt family. UDP-L-Ara4N formyltransferase subfamily. It in the C-terminal section; belongs to the NAD(P)-dependent epimerase/dehydratase family. UDP-glucuronic acid decarboxylase subfamily. Homohexamer, formed by a dimer of trimers.

It catalyses the reaction UDP-alpha-D-glucuronate + NAD(+) = UDP-beta-L-threo-pentopyranos-4-ulose + CO2 + NADH. The catalysed reaction is UDP-4-amino-4-deoxy-beta-L-arabinose + (6R)-10-formyltetrahydrofolate = UDP-4-deoxy-4-formamido-beta-L-arabinose + (6S)-5,6,7,8-tetrahydrofolate + H(+). It participates in nucleotide-sugar biosynthesis; UDP-4-deoxy-4-formamido-beta-L-arabinose biosynthesis; UDP-4-deoxy-4-formamido-beta-L-arabinose from UDP-alpha-D-glucuronate: step 1/3. The protein operates within nucleotide-sugar biosynthesis; UDP-4-deoxy-4-formamido-beta-L-arabinose biosynthesis; UDP-4-deoxy-4-formamido-beta-L-arabinose from UDP-alpha-D-glucuronate: step 3/3. Its pathway is bacterial outer membrane biogenesis; lipopolysaccharide biosynthesis. Functionally, bifunctional enzyme that catalyzes the oxidative decarboxylation of UDP-glucuronic acid (UDP-GlcUA) to UDP-4-keto-arabinose (UDP-Ara4O) and the addition of a formyl group to UDP-4-amino-4-deoxy-L-arabinose (UDP-L-Ara4N) to form UDP-L-4-formamido-arabinose (UDP-L-Ara4FN). The modified arabinose is attached to lipid A and is required for resistance to polymyxin and cationic antimicrobial peptides. In Escherichia coli O6:K15:H31 (strain 536 / UPEC), this protein is Bifunctional polymyxin resistance protein ArnA.